The chain runs to 353 residues: Forkhead box protein I3-A (353 aa).

Residues 116-210 (RPPYSYSALI…DNGNFRRKRK (95 aa)) constitute a DNA-binding region (fork-head). A disordered region spans residues 201-255 (DNGNFRRKRKRKSDSLAEEEGKGYSGSDSALSSPKNPSDSSERGNSPISTDQAPC). Residues 206 to 212 (RRKRKRK) carry the Nuclear localization signal motif. Over residues 213–222 (SDSLAEEEGK) the composition is skewed to basic and acidic residues. Residues 226–252 (GSDSALSSPKNPSDSSERGNSPISTDQ) are compositionally biased toward polar residues.

Expressed in ionocyte precursors.

The protein localises to the nucleus. Transcription factor required for epithelial cell differentiation. Involved in specification of skin ionocytes from epidermal precursors. In Danio rerio (Zebrafish), this protein is Forkhead box protein I3-A.